The sequence spans 112 residues: uncharacterized protein (112 aa).

A signal peptide spans Met-1–Ala-21. HhH domains are found at residues Asp-49–Tyr-79 and Arg-80–Arg-109.

This is an uncharacterized protein from Haemophilus influenzae (strain ATCC 51907 / DSM 11121 / KW20 / Rd).